Consider the following 570-residue polypeptide: MALKKSSPSLDSGDSDSEELPTFAFLKKEPSSTKRRQPEREEKIVVVDISDCEASCPPAPELFSPPVPEIAETVTQTQPVRLLSSESEDEEEFIPLAQRLTCKFLTHKQLSPEDSSSPVKSVLDHQNNEGASCDWKKPFPKIPEVPLHDTPERSAADNKDLILDPCCQLPAYLSTCPGQSSSLAVTKTNSDILPPQKKTKPSQKVQGRGSHGCRQQRQARQKESTLRRQERKNAALVTRMKAQRPEECLKHIIVVLDPVLLQMEGGGQLLGALQTMECRCVIEAQAVPCSVTWRRRAGPSEDREDWVEEPTVLVLLRAEAFVSMIDNGKQGSLDSTMKGKETLQGFVTDITAKTAGKALSLVIVDQEKCFSAQNPPRRGKQGANKQTKKQQQRQPEASIGSMVSRVDAEEALVDLQLHTEAQAQIVQSWKELADFTCAFTKAVAEAPFKKLRDETTFSFCLESDWAGGVKVDLAGRGLALVWRRQIQQLNRVSLEMASAVVNAYPSPQLLVQAYQQCFSDKERQNLLADIQVRRGEGVTSTSRRIGPELSRRIYLQMTTLQPHLSLDSAD.

Positions 1–12 (MALKKSSPSLDS) are enriched in low complexity. The segment at 1–42 (MALKKSSPSLDSGDSDSEELPTFAFLKKEPSSTKRRQPEREE) is disordered. A phosphoserine mark is found at Ser-12 and Ser-15. Residues 26-42 (LKKEPSSTKRRQPEREE) show a composition bias toward basic and acidic residues. Ser-84, Ser-85, and Ser-87 each carry phosphoserine. Residue Lys-103 forms a Glycyl lysine isopeptide (Lys-Gly) (interchain with G-Cter in SUMO2) linkage. Phosphoserine is present on residues Ser-111 and Ser-117. Residues Lys-136 and Lys-141 each participate in a glycyl lysine isopeptide (Lys-Gly) (interchain with G-Cter in SUMO2) cross-link. Thr-150 carries the post-translational modification Phosphothreonine. 2 disordered regions span residues 187 to 233 (KTNS…ERKN) and 372 to 400 (AQNPPRRGKQGANKQTKKQQQRQPEASIG). The span at 220 to 233 (RQKESTLRRQERKN) shows a compositional bias: basic and acidic residues. Positions 250-456 (KHIIVVLDPV…PFKKLRDETT (207 aa)) are nuclease-like domain; forms the post-nick DNA binding interface and is involved in DNA recognition and bending. The segment at 476-570 (RGLALVWRRQ…QPHLSLDSAD (95 aa)) is helix-hairpin-helix (2HhH); forms the pre-nick DNA binding interface and is involved in DNA recognition and bending.

It belongs to the EME1/MMS4 family. In terms of assembly, part of the heterodimeric MUS81-EME1 complex.

Its subcellular location is the nucleus. The protein resides in the nucleolus. Non-catalytic subunit of the structure-specific, heterodimeric DNA endonuclease MUS81-EME1 which is involved in the maintenance of genome stability. In the complex, EME1 is required for DNA cleavage, participating in DNA recognition and bending. MUS81-EME1 cleaves 3'-flaps and nicked Holliday junctions, and exhibit limited endonuclease activity with 5' flaps and nicked double-stranded DNAs. Active during prometaphase, MUS81-EME1 resolves mitotic recombination intermediates, including Holliday junctions, which form during homologous recombination. The chain is Structure-specific endonuclease subunit EME1 from Homo sapiens (Human).